The primary structure comprises 159 residues: Small ribosomal subunit protein uS9 (159 aa).

Belongs to the universal ribosomal protein uS9 family.

The protein is Small ribosomal subunit protein uS9 of Rickettsia massiliae (strain Mtu5).